The sequence spans 419 residues: 3-isopropylmalate dehydratase large subunit (419 aa).

Residues C300, C360, and C363 each coordinate [4Fe-4S] cluster.

It belongs to the aconitase/IPM isomerase family. LeuC type 2 subfamily. As to quaternary structure, heterodimer of LeuC and LeuD. [4Fe-4S] cluster is required as a cofactor.

It carries out the reaction (2R,3S)-3-isopropylmalate = (2S)-2-isopropylmalate. Its pathway is amino-acid biosynthesis; L-leucine biosynthesis; L-leucine from 3-methyl-2-oxobutanoate: step 2/4. Catalyzes the isomerization between 2-isopropylmalate and 3-isopropylmalate, via the formation of 2-isopropylmaleate. This Clostridium botulinum (strain Alaska E43 / Type E3) protein is 3-isopropylmalate dehydratase large subunit.